Consider the following 255-residue polypeptide: Dehydrogenase/reductase SDR family member 11 (255 aa).

The first 23 residues, 1–23 (MERWTGRVALVTGASVGIGAAVA), serve as a signal peptide directing secretion. NADP(+)-binding positions include 13–18 (GASVGI), 38–39 (RS), Glu-44, 65–66 (DL), and Asn-92. Residues Ser-146 and Tyr-161 each contribute to the substrate site. NADP(+)-binding positions include Tyr-161, Lys-165, 196 to 199 (VETG), and Lys-203. Tyr-161 serves as the catalytic Proton acceptor.

Belongs to the short-chain dehydrogenases/reductases (SDR) family.

It is found in the secreted. The enzyme catalyses a 3beta-hydroxysteroid + NADP(+) = a 3-oxosteroid + NADPH + H(+). It carries out the reaction 17beta-estradiol + NAD(+) = estrone + NADH + H(+). It catalyses the reaction 17beta-estradiol + NADP(+) = estrone + NADPH + H(+). Its pathway is steroid biosynthesis; estrogen biosynthesis. Its activity is regulated as follows. Inhibited by flavonoids including apigenin, luteolin, genistein, kaempferol and quercetin and also by carbenoxolone, zearalenone, glycyrrhetinic, curcumin and flufenamic acid. Functionally, catalyzes the conversion of the 17-keto group of estrone, 4- and 5-androstenes and 5-alpha-androstanes into their 17-beta-hydroxyl metabolites and the conversion of the 3-keto group of 3-, 3,17- and 3,20- diketosteroids into their 3-hydroxyl metabolites. Exhibits reductive 3-beta-hydroxysteroid dehydrogenase activity toward 5-beta-androstanes, 5-beta-pregnanes, 4-pregnenes and bile acids. May also reduce endogenous and exogenous alpha-dicarbonyl compounds and xenobiotic alicyclic ketones. This is Dehydrogenase/reductase SDR family member 11 (DHRS11) from Gallus gallus (Chicken).